Here is an 857-residue protein sequence, read N- to C-terminus: Envelope glycoprotein B (857 aa).

Positions 1–21 (MTRRRVLSVVVLLAALACRLG) are cleaved as a signal peptide. The Virion surface portion of the chain corresponds to 22-732 (AQTPEQPAPP…SGFISFFKNP (711 aa)). 5 disulfide bridges follow: Cys-51-Cys-528, Cys-68-Cys-484, Cys-141-Cys-206, Cys-295-Cys-342, and Cys-551-Cys-588. The N-linked (GlcNAc...) asparagine; by host glycan is linked to Asn-76. The involved in fusion and/or binding to host membrane stretch occupies residues 108-114 (IYNGWYA). The N-linked (GlcNAc...) asparagine; by host glycan is linked to Asn-163. An involved in fusion and/or binding to host membrane region spans residues 192-200 (GWLIWTYRT). N-linked (GlcNAc...) asparagine; by host glycans are attached at residues Asn-290, Asn-329, Asn-348, and Asn-395. The tract at residues 398–453 (ELTTPTSSPPSSPSPPAPSAARGSTPAAVLRRRRRDAGNATTPVPPTAPGKSLGTL) is disordered. Positions 404-415 (SSPPSSPSPPAP) are enriched in pro residues. The span at 416 to 425 (SAARGSTPAA) shows a compositional bias: low complexity. Residues Asn-436, Asn-563, and Asn-629 are each glycosylated (N-linked (GlcNAc...) asparagine; by host). An oligomerization region spans residues 561 to 620 (FINDTKTYEGQLGTDNEIFLTKKMTEVCQATSQYYFQSGNEIHVYNDYHHFKTIELDGIA). Hydrophobic membrane proximal region regions lie at residues 678-730 (LDNA…SFFK) and 709-729 (NLVS…ISFF). A helical transmembrane segment spans residues 733-753 (FGGMLILVLVAGVVILVISLT). Over 754 to 857 (RRTRQMSQQP…ALLGEAETEF (104 aa)) the chain is Intravirion. Residues 832 to 857 (FPGLRRRRYHDPETAAALLGEAETEF) form a disordered region. Residues 845 to 857 (TAAALLGEAETEF) show a composition bias toward low complexity.

It belongs to the herpesviridae glycoprotein B family. As to quaternary structure, homotrimer; disulfide-linked. Binds to heparan sulfate proteoglycans. Interacts with gH/gL heterodimer. In terms of processing, a proteolytic cleavage by host furin generates two subunits that remain linked by disulfide bonds.

It is found in the virion membrane. It localises to the host cell membrane. Its subcellular location is the host endosome membrane. The protein resides in the host Golgi apparatus membrane. Envelope glycoprotein that forms spikes at the surface of virion envelope. Essential for the initial attachment to heparan sulfate moieties of the host cell surface proteoglycans. Involved in fusion of viral and cellular membranes leading to virus entry into the host cell. Following initial binding to its host receptors, membrane fusion is mediated by the fusion machinery composed at least of gB and the heterodimer gH/gL. May be involved in the fusion between the virion envelope and the outer nuclear membrane during virion egress. The protein is Envelope glycoprotein B of Epstein-Barr virus (strain B95-8) (HHV-4).